Consider the following 196-residue polypeptide: Pyridoxal 5'-phosphate synthase subunit PdxT (196 aa).

47 to 49 contributes to the L-glutamine binding site; the sequence is GES. The active-site Nucleophile is C79. L-glutamine-binding positions include R106 and 134-135; that span reads IR. Active-site charge relay system residues include H170 and E172.

The protein belongs to the glutaminase PdxT/SNO family. As to quaternary structure, in the presence of PdxS, forms a dodecamer of heterodimers. Only shows activity in the heterodimer.

It catalyses the reaction aldehydo-D-ribose 5-phosphate + D-glyceraldehyde 3-phosphate + L-glutamine = pyridoxal 5'-phosphate + L-glutamate + phosphate + 3 H2O + H(+). The enzyme catalyses L-glutamine + H2O = L-glutamate + NH4(+). It functions in the pathway cofactor biosynthesis; pyridoxal 5'-phosphate biosynthesis. Its function is as follows. Catalyzes the hydrolysis of glutamine to glutamate and ammonia as part of the biosynthesis of pyridoxal 5'-phosphate. The resulting ammonia molecule is channeled to the active site of PdxS. This is Pyridoxal 5'-phosphate synthase subunit PdxT from Bacillus cereus (strain G9842).